Consider the following 227-residue polypeptide: Riboflavin kinase (227 aa).

An H-T-H motif-like region spans residues 1 to 92 (MSKDYEVFPL…LKRTIDSSTF (92 aa)). The interval 93 to 227 (LTLRGYVVPG…GDKVEVVIPV (135 aa)) is riboflavin kinase. A CDP-binding site is contributed by 102–107 (GLGEGA). Mg(2+)-binding residues include Thr-131 and Asn-133. FMN contacts are provided by Thr-194 and Glu-202. CDP is bound at residue 207 to 210 (VRLR).

Belongs to the archaeal riboflavin kinase family. It depends on Mg(2+) as a cofactor.

It catalyses the reaction riboflavin + CTP = CDP + FMN + H(+). The protein operates within cofactor biosynthesis; FMN biosynthesis; FMN from riboflavin (CTP route): step 1/1. In terms of biological role, catalyzes the CTP-dependent phosphorylation of riboflavin (vitamin B2) to form flavin mononucleotide (FMN). The protein is Riboflavin kinase (ribK) of Thermofilum pendens (strain DSM 2475 / Hrk 5).